The primary structure comprises 512 residues: Putative ribose/galactose/methyl galactoside import ATP-binding protein 2 (512 aa).

ABC transporter domains lie at 14-251 (IALT…VGRQ) and 262-507 (TSGN…TQRE). An ATP-binding site is contributed by 46-53 (GENGAGKS).

Belongs to the ABC transporter superfamily. Carbohydrate importer 2 (CUT2) (TC 3.A.1.2) family.

The protein resides in the cell inner membrane. The enzyme catalyses D-ribose(out) + ATP + H2O = D-ribose(in) + ADP + phosphate + H(+). The catalysed reaction is D-galactose(out) + ATP + H2O = D-galactose(in) + ADP + phosphate + H(+). In terms of biological role, part of an ABC transporter complex involved in carbohydrate import. Could be involved in ribose, galactose and/or methyl galactoside import. Responsible for energy coupling to the transport system. This Burkholderia cenocepacia (strain HI2424) protein is Putative ribose/galactose/methyl galactoside import ATP-binding protein 2.